The following is a 518-amino-acid chain: Kelch repeat and BTB domain-containing protein 4 (518 aa).

One can recognise a BTB domain in the interval 45-112; that stretch reads ADVTISVEGR…IYHGTVKLRA (68 aa). A BACK domain is found at 147-239; the sequence is CLQVMWLADR…SLKEIGENVH (93 aa). Kelch repeat units lie at residues 239–285, 286–328, 331–378, 380–430, and 432–481; these read HIYL…KHGG, DLYV…SVPG, AIYS…NLNG, IYLL…VHKD, and VFIV…VFRD.

As to quaternary structure, component of the BCR(KBTBD4) E3 ubiquitin ligase complex, at least composed of CUL3, KBTBD4 and RBX1.

In terms of biological role, substrate-specific adapter of a BCR (BTB-CUL3-RBX1) E3 ubiquitin ligase complex which targets CoREST corepressor complex components RCOR1, KDM1A/LSD1 and HDAC2 for proteasomal degradation. RCOR1 is likely to be the primary target while degradation of KDM1A and HDAC2 is likely due to their association with RCOR1. Also targets RCOR3, MIER2 and MIER3 for proteasomal degradation as well as associated proteins ZNF217 and RREB1. Degradation is dependent on the presence of an ELM2 domain in the target proteins. In Pongo abelii (Sumatran orangutan), this protein is Kelch repeat and BTB domain-containing protein 4 (KBTBD4).